The following is a 271-amino-acid chain: Na(+), Li(+), K(+)/H(+) antiporter subunit B (271 aa).

A run of 7 helical transmembrane segments spans residues 2-22 (ILLT…AIIF), 36-56 (LPQV…FLVG), 94-114 (WVYL…PSLI), 130-150 (PFML…LGTW), 152-172 (IVMG…VIIQ), 193-213 (STIT…SIPG), and 216-236 (ALMD…ITVM). Residues 252–271 (TPHLSYSKAPPPSKGDNNAL) form a disordered region.

The protein belongs to the UmpA/UmpB family. In terms of assembly, heterodimer composed of UmpA and UmpB.

The protein resides in the cell membrane. Its function is as follows. Part of a two-component antiporter that catalyzes the efflux of Na(+), Li(+) and K(+) in exchange for external protons. Shows a preference for Na(+), followed by K(+) and Li(+). The polypeptide is Na(+), Li(+), K(+)/H(+) antiporter subunit B (Vreelandella zhaodongensis (Halomonas zhaodongensis)).